The primary structure comprises 554 residues: Formate--tetrahydrofolate ligase (554 aa).

Residue 65 to 72 (TPAGEGKT) participates in ATP binding.

Belongs to the formate--tetrahydrofolate ligase family.

The enzyme catalyses (6S)-5,6,7,8-tetrahydrofolate + formate + ATP = (6R)-10-formyltetrahydrofolate + ADP + phosphate. Its pathway is one-carbon metabolism; tetrahydrofolate interconversion. The protein is Formate--tetrahydrofolate ligase of Petrotoga mobilis (strain DSM 10674 / SJ95).